The following is a 169-amino-acid chain: S-ribosylhomocysteine lyase (169 aa).

H54, H58, and C128 together coordinate Fe cation.

Belongs to the LuxS family. In terms of assembly, homodimer. The cofactor is Fe cation.

The enzyme catalyses S-(5-deoxy-D-ribos-5-yl)-L-homocysteine = (S)-4,5-dihydroxypentane-2,3-dione + L-homocysteine. Functionally, involved in the synthesis of autoinducer 2 (AI-2) which is secreted by bacteria and is used to communicate both the cell density and the metabolic potential of the environment. The regulation of gene expression in response to changes in cell density is called quorum sensing. Catalyzes the transformation of S-ribosylhomocysteine (RHC) to homocysteine (HC) and 4,5-dihydroxy-2,3-pentadione (DPD). In Aeromonas hydrophila subsp. hydrophila (strain ATCC 7966 / DSM 30187 / BCRC 13018 / CCUG 14551 / JCM 1027 / KCTC 2358 / NCIMB 9240 / NCTC 8049), this protein is S-ribosylhomocysteine lyase.